The chain runs to 412 residues: Subtilisin-like protease 6 (412 aa).

The signal sequence occupies residues 1–20; it reads MGFITKAIPIVLAALSTVNG. The propeptide occupies 21–126; the sequence is ARILEAGPHA…VVRTTTNGTN (106 aa). An Inhibitor I9 domain is found at 36-120; it reads KYIVVMKREV…FIEPDFVVRT (85 aa). Residues asparagine 123 and asparagine 126 are each glycosylated (N-linked (GlcNAc...) asparagine). The Peptidase S8 domain occupies 135 to 412; the sequence is SWGLARVGSK…GKLIYNGSGK (278 aa). Active-site charge relay system residues include aspartate 167 and histidine 198. N-linked (GlcNAc...) asparagine glycans are attached at residues asparagine 252 and asparagine 264. Serine 358 functions as the Charge relay system in the catalytic mechanism. Asparagine 408 is a glycosylation site (N-linked (GlcNAc...) asparagine).

Belongs to the peptidase S8 family.

The protein localises to the secreted. In terms of biological role, secreted subtilisin-like serine protease with keratinolytic activity that contributes to pathogenicity. The sequence is that of Subtilisin-like protease 6 (SUB6) from Trichophyton rubrum (Athlete's foot fungus).